Reading from the N-terminus, the 148-residue chain is Protein NrdI (148 aa).

Belongs to the NrdI family.

Functionally, probably involved in ribonucleotide reductase function. The polypeptide is Protein NrdI (Corynebacterium glutamicum (strain R)).